A 213-amino-acid chain; its full sequence is Large ribosomal subunit protein uL1 (213 aa).

It belongs to the universal ribosomal protein uL1 family. As to quaternary structure, part of the 50S ribosomal subunit.

Functionally, binds directly to 23S rRNA. Probably involved in E site tRNA release. Its function is as follows. Protein L1 is also a translational repressor protein, it controls the translation of its operon by binding to its mRNA. In Methanocorpusculum labreanum (strain ATCC 43576 / DSM 4855 / Z), this protein is Large ribosomal subunit protein uL1.